The following is a 750-amino-acid chain: Photosystem I P700 chlorophyll a apoprotein A1 (750 aa).

Helical transmembrane passes span 70–93 (VFSA…FHGA), 156–179 (LYCT…FHYH), 195–219 (LNHH…HVSL), 291–309 (IAHH…GHMY), 346–369 (WHAQ…HHMY), 385–411 (LSLF…IFMV), 433–455 (AIIS…LYIH), and 531–549 (FLVH…LILL). The [4Fe-4S] cluster site is built by cysteine 573 and cysteine 582. 2 helical membrane passes run 589–610 (HVFL…HFSW) and 664–686 (LSAY…MFLF). Position 675 (histidine 675) interacts with chlorophyll a'. Chlorophyll a contacts are provided by methionine 683 and tyrosine 691. Residue tryptophan 692 coordinates phylloquinone. The helical transmembrane segment at 724-744 (AVGVTHYLLGGIATTWAFFLA) threads the bilayer.

It belongs to the PsaA/PsaB family. In terms of assembly, the PsaA/B heterodimer binds the P700 chlorophyll special pair and subsequent electron acceptors. PSI consists of a core antenna complex that captures photons, and an electron transfer chain that converts photonic excitation into a charge separation. The eukaryotic PSI reaction center is composed of at least 11 subunits. The cofactor is P700 is a chlorophyll a/chlorophyll a' dimer, A0 is one or more chlorophyll a, A1 is one or both phylloquinones and FX is a shared 4Fe-4S iron-sulfur center..

It localises to the plastid. It is found in the chloroplast thylakoid membrane. It carries out the reaction reduced [plastocyanin] + hnu + oxidized [2Fe-2S]-[ferredoxin] = oxidized [plastocyanin] + reduced [2Fe-2S]-[ferredoxin]. Functionally, psaA and PsaB bind P700, the primary electron donor of photosystem I (PSI), as well as the electron acceptors A0, A1 and FX. PSI is a plastocyanin-ferredoxin oxidoreductase, converting photonic excitation into a charge separation, which transfers an electron from the donor P700 chlorophyll pair to the spectroscopically characterized acceptors A0, A1, FX, FA and FB in turn. Oxidized P700 is reduced on the lumenal side of the thylakoid membrane by plastocyanin. This Draba nemorosa (Woodland whitlowgrass) protein is Photosystem I P700 chlorophyll a apoprotein A1.